The following is a 302-amino-acid chain: Surfeit locus protein 4 homolog (302 aa).

The next 6 membrane-spanning stretches (helical) occupy residues 95 to 115 (APLL…LVVF), 120 to 140 (AYAI…YGLI), 193 to 213 (VLLI…ISWT), 215 to 235 (ILVH…FKAK), 236 to 256 (FFAA…NSFW), and 271 to 291 (DFFQ…TGPG). A Di-lysine motif motif is present at residues 299 to 302 (KKIY).

This sequence belongs to the SURF4 family.

It is found in the endoplasmic reticulum membrane. The polypeptide is Surfeit locus protein 4 homolog (Schizosaccharomyces pombe (strain 972 / ATCC 24843) (Fission yeast)).